Reading from the N-terminus, the 290-residue chain is Arylamine N-acetyltransferase 1 (290 aa).

Residue Met-1 is modified to N-acetylmethionine. Ser-103 lines the CoA pocket. A substrate-binding site is contributed by 106–107 (IH). Tyr-208 lines the CoA pocket.

Belongs to the arylamine N-acetyltransferase family.

It is found in the cytoplasm. The enzyme catalyses an arylamine + acetyl-CoA = an N-acetylarylamine + CoA. Participates in the detoxification of a plethora of hydrazine and arylamine drugs. The polypeptide is Arylamine N-acetyltransferase 1 (NAT1) (Bos taurus (Bovine)).